The following is a 292-amino-acid chain: High-affinity heme uptake system protein IsdE (292 aa).

Residues 1-19 (MRIIKYLTILVISVVILTS) form the signal peptide. Residue cysteine 20 is the site of N-palmitoyl cysteine attachment. A lipid anchor (S-diacylglycerol cysteine) is attached at cysteine 20. The Fe/B12 periplasmic-binding domain maps to 35-291 (RIVPTTVALT…QLYDLFYKDK (257 aa)). Residues valine 41, alanine 42, serine 60, tyrosine 61, methionine 78, and histidine 229 each contribute to the heme site.

The protein belongs to the bacterial solute-binding protein 8 family. Requires heme b as cofactor.

Its subcellular location is the cell membrane. Involved in heme (porphyrin) scavenging. Binds Fe(2+) and Fe(3+) heme but the largest fraction is Fe(2+) heme. Functions as a high-affinity heme binding protein and probably has a role in relaying heme-iron from cell wall-anchored isd proteins receptors to the probable permease IsdF. This is High-affinity heme uptake system protein IsdE (isdE) from Staphylococcus aureus (strain MRSA252).